The primary structure comprises 875 residues: uncharacterized protein (875 aa).

This is an uncharacterized protein from Mycobacterium bovis (strain ATCC BAA-935 / AF2122/97).